Here is a 603-residue protein sequence, read N- to C-terminus: Deuterosome assembly protein 1 (603 aa).

5 coiled-coil regions span residues 14 to 59 (CEAE…NAQT), 85 to 197 (MTQN…GKKQ), 227 to 278 (IEKL…ELQS), 336 to 399 (QDQP…KQLK), and 454 to 480 (HTSI…NGKS). Residue S546 is modified to Phosphoserine. A coiled-coil region spans residues 557 to 600 (AAQHFLLEEEKRAKELEKLLNTHIDELQRHTEFTLNKYSKLKQN).

Belongs to the CEP63 family. In terms of assembly, interacts with CEP152; the interaction is mutually exclusive with CEP63.

Its subcellular location is the cytoplasm. In terms of biological role, key structural component of the deuterosome, a structure that promotes de novo centriole amplification in multiciliated cells. Deuterosome-mediated centriole amplification occurs in terminally differentiated multiciliated cells and can generate more than 100 centrioles. Probably sufficient for the specification and formation of the deuterosome inner core. Interacts with CEP152 and recruits PLK4 to activate centriole biogenesis. The protein is Deuterosome assembly protein 1 of Macaca fascicularis (Crab-eating macaque).